The following is a 126-amino-acid chain: Histone H2B type 1-K (126 aa).

Over residues 1–12 the composition is skewed to low complexity; it reads MPEPAKSAPAPK. Residues 1-36 are disordered; the sequence is MPEPAKSAPAPKKGSKKAVTKAQKKDGKKRKRSRKE. N-acetylproline is present on proline 2. An ADP-ribosyl glutamic acid modification is found at glutamate 3. Residue lysine 6 is modified to N6-(2-hydroxyisobutyryl)lysine; alternate. Lysine 6 bears the N6-(beta-hydroxybutyryl)lysine; alternate mark. Lysine 6 carries the N6-acetyllysine; alternate modification. Lysine 6 is subject to N6-butyryllysine; alternate. Lysine 6 bears the N6-crotonyllysine; alternate mark. Lysine 6 bears the N6-lactoyllysine; alternate mark. A Glycyl lysine isopeptide (Lys-Gly) (interchain with G-Cter in SUMO2); alternate cross-link involves residue lysine 6. Serine 7 is modified (ADP-ribosylserine). Lysine 12 bears the N6-(beta-hydroxybutyryl)lysine; alternate mark. Lysine 12 and lysine 13 each carry N6-acetyllysine; alternate. Lysine 12 and lysine 13 each carry N6-crotonyllysine; alternate. Residue lysine 12 is modified to N6-lactoyllysine; alternate. The residue at position 13 (lysine 13) is an N6-(2-hydroxyisobutyryl)lysine; alternate. The residue at position 15 (serine 15) is a Phosphoserine; by STK4/MST1. An N6-acetyllysine; alternate mark is found at lysine 16, lysine 17, lysine 21, and lysine 24. Residues lysine 16, lysine 17, lysine 21, and lysine 24 each carry the N6-crotonyllysine; alternate modification. Residues lysine 16, lysine 17, lysine 21, and lysine 24 each carry the N6-lactoyllysine; alternate modification. Lysine 17 carries the N6-glutaryllysine; alternate modification. Lysine 21 and lysine 24 each carry N6-(2-hydroxyisobutyryl)lysine; alternate. Lysine 21 is subject to N6-(beta-hydroxybutyryl)lysine; alternate. N6-butyryllysine; alternate is present on lysine 21. Lysine 21 is covalently cross-linked (Glycyl lysine isopeptide (Lys-Gly) (interchain with G-Cter in SUMO2); alternate). An N6-(2-hydroxyisobutyryl)lysine modification is found at lysine 25. Position 35 is an N6-(2-hydroxyisobutyryl)lysine; alternate (lysine 35). Lysine 35 is subject to N6-(beta-hydroxybutyryl)lysine; alternate. Lysine 35 is subject to N6-crotonyllysine; alternate. Residue lysine 35 is modified to N6-glutaryllysine; alternate. Residue lysine 35 is modified to N6-succinyllysine; alternate. Lysine 35 is covalently cross-linked (Glycyl lysine isopeptide (Lys-Gly) (interchain with G-Cter in ubiquitin); alternate). At glutamate 36 the chain carries PolyADP-ribosyl glutamic acid. Serine 37 is modified (phosphoserine; by AMPK). Lysine 44, lysine 47, and lysine 58 each carry N6-(2-hydroxyisobutyryl)lysine; alternate. Residue lysine 44 is modified to N6-lactoyllysine; alternate. An N6-glutaryllysine; alternate mark is found at lysine 44 and lysine 47. At lysine 47 the chain carries N6-methyllysine; alternate. Lysine 58 carries the N6,N6-dimethyllysine; alternate modification. Arginine 80 is modified (dimethylated arginine). Position 86 is an N6-(2-hydroxyisobutyryl)lysine; alternate (lysine 86). Lysine 86 is modified (N6-acetyllysine; alternate). Lysine 86 is subject to N6-lactoyllysine; alternate. Lysine 86 carries the N6,N6,N6-trimethyllysine; alternate modification. Omega-N-methylarginine occurs at positions 87 and 93. At lysine 109 the chain carries N6-(2-hydroxyisobutyryl)lysine; alternate. Lysine 109 bears the N6-(beta-hydroxybutyryl)lysine; alternate mark. N6-lactoyllysine; alternate is present on lysine 109. Lysine 109 bears the N6-glutaryllysine; alternate mark. An N6-methyllysine; alternate modification is found at lysine 109. O-linked (GlcNAc) serine glycosylation is present at serine 113. Threonine 116 carries the phosphothreonine modification. Residues lysine 117 and lysine 121 each carry the N6-(2-hydroxyisobutyryl)lysine; alternate modification. At lysine 117 the chain carries N6-(beta-hydroxybutyryl)lysine; alternate. Lysine 117 and lysine 121 each carry N6-lactoyllysine; alternate. An N6-glutaryllysine; alternate mark is found at lysine 117 and lysine 121. N6-succinyllysine; alternate occurs at positions 117 and 121. N6-methylated lysine; alternate is present on lysine 117. Residue lysine 121 forms a Glycyl lysine isopeptide (Lys-Gly) (interchain with G-Cter in ubiquitin); alternate linkage.

It belongs to the histone H2B family. As to quaternary structure, the nucleosome is a histone octamer containing two molecules each of H2A, H2B, H3 and H4 assembled in one H3-H4 heterotetramer and two H2A-H2B heterodimers. The octamer wraps approximately 147 bp of DNA. Post-translationally, monoubiquitination at Lys-35 (H2BK34Ub) by the MSL1/MSL2 dimer is required for histone H3 'Lys-4' (H3K4me) and 'Lys-79' (H3K79me) methylation and transcription activation at specific gene loci, such as HOXA9 and MEIS1 loci. Similarly, monoubiquitination at Lys-121 (H2BK120Ub) by the RNF20/40 complex gives a specific tag for epigenetic transcriptional activation and is also prerequisite for histone H3 'Lys-4' and 'Lys-79' methylation. It also functions cooperatively with the FACT dimer to stimulate elongation by RNA polymerase II. H2BK120Ub also acts as a regulator of mRNA splicing: deubiquitination by USP49 is required for efficient cotranscriptional splicing of a large set of exons. In terms of processing, phosphorylated on Ser-15 (H2BS14ph) by STK4/MST1 during apoptosis; which facilitates apoptotic chromatin condensation. Also phosphorylated on Ser-15 in response to DNA double strand breaks (DSBs), and in correlation with somatic hypermutation and immunoglobulin class-switch recombination. Phosphorylation at Ser-37 (H2BS36ph) by AMPK in response to stress promotes transcription. GlcNAcylation at Ser-113 promotes monoubiquitination of Lys-121. It fluctuates in response to extracellular glucose, and associates with transcribed genes. Post-translationally, ADP-ribosylated by PARP1 or PARP2 on Ser-7 (H2BS6ADPr) in response to DNA damage. H2BS6ADPr promotes recruitment of CHD1L. Mono-ADP-ribosylated on Glu-3 (H2BE2ADPr) by PARP3 in response to single-strand breaks. Poly ADP-ribosylation on Glu-36 (H2BE35ADPr) by PARP1 regulates adipogenesis: it inhibits phosphorylation at Ser-37 (H2BS36ph), thereby blocking expression of pro-adipogenetic genes. In terms of processing, crotonylation (Kcr) is specifically present in male germ cells and marks testis-specific genes in post-meiotic cells, including X-linked genes that escape sex chromosome inactivation in haploid cells. Crotonylation marks active promoters and enhancers and confers resistance to transcriptional repressors. It is also associated with post-meiotically activated genes on autosomes. Hydroxybutyrylation of histones is induced by starvation. Post-translationally, lactylated in macrophages by EP300/P300 by using lactoyl-CoA directly derived from endogenous or exogenous lactate, leading to stimulates gene transcription.

It is found in the nucleus. It localises to the chromosome. Core component of nucleosome. Nucleosomes wrap and compact DNA into chromatin, limiting DNA accessibility to the cellular machineries which require DNA as a template. Histones thereby play a central role in transcription regulation, DNA repair, DNA replication and chromosomal stability. DNA accessibility is regulated via a complex set of post-translational modifications of histones, also called histone code, and nucleosome remodeling. This chain is Histone H2B type 1-K, found in Mus musculus (Mouse).